The sequence spans 431 residues: Trigger factor (431 aa).

The PPIase FKBP-type domain occupies 160-245 (DDRVTIDFVG…VKKVEVMVLP (86 aa)).

Belongs to the FKBP-type PPIase family. Tig subfamily.

It localises to the cytoplasm. The enzyme catalyses [protein]-peptidylproline (omega=180) = [protein]-peptidylproline (omega=0). Functionally, involved in protein export. Acts as a chaperone by maintaining the newly synthesized protein in an open conformation. Functions as a peptidyl-prolyl cis-trans isomerase. This Mannheimia succiniciproducens (strain KCTC 0769BP / MBEL55E) protein is Trigger factor.